A 108-amino-acid chain; its full sequence is Peptidyl-prolyl cis-trans isomerase FKBP1C (108 aa).

The PPIase FKBP-type domain maps to 20–108 (SQTCVMHYTG…VFDVELLKLE (89 aa)).

This sequence belongs to the FKBP-type PPIase family. FKBP1 subfamily.

The catalysed reaction is [protein]-peptidylproline (omega=180) = [protein]-peptidylproline (omega=0). Functionally, catalyzes the cis-trans isomerization of proline imidic peptide bonds in oligopeptides. In Homo sapiens (Human), this protein is Peptidyl-prolyl cis-trans isomerase FKBP1C.